Here is a 247-residue protein sequence, read N- to C-terminus: Phosphoribosylaminoimidazole-succinocarboxamide synthase (247 aa).

This sequence belongs to the SAICAR synthetase family.

It carries out the reaction 5-amino-1-(5-phospho-D-ribosyl)imidazole-4-carboxylate + L-aspartate + ATP = (2S)-2-[5-amino-1-(5-phospho-beta-D-ribosyl)imidazole-4-carboxamido]succinate + ADP + phosphate + 2 H(+). It functions in the pathway purine metabolism; IMP biosynthesis via de novo pathway; 5-amino-1-(5-phospho-D-ribosyl)imidazole-4-carboxamide from 5-amino-1-(5-phospho-D-ribosyl)imidazole-4-carboxylate: step 1/2. This Prochlorococcus marinus (strain NATL1A) protein is Phosphoribosylaminoimidazole-succinocarboxamide synthase.